Reading from the N-terminus, the 137-residue chain is Acidic phospholipase A2 VP8 (137 aa).

The N-terminal stretch at 1 to 16 (MRILWIVAVCLIGVEG) is a signal peptide. Cystine bridges form between Cys41-Cys130, Cys43-Cys59, Cys58-Cys110, Cys64-Cys137, Cys65-Cys103, Cys72-Cys96, and Cys90-Cys101. 3 residues coordinate Ca(2+): Tyr42, Gly44, and Gly46. The active site involves His62. Asp63 contributes to the Ca(2+) binding site. Asp104 is a catalytic residue.

This sequence belongs to the phospholipase A2 family. Group II subfamily. D49 sub-subfamily. Does not form a complex. It depends on Ca(2+) as a cofactor. As to expression, expressed by the venom gland.

It localises to the secreted. The enzyme catalyses a 1,2-diacyl-sn-glycero-3-phosphocholine + H2O = a 1-acyl-sn-glycero-3-phosphocholine + a fatty acid + H(+). In terms of biological role, snake venom phospholipase A2 (PLA2) that is not toxic by itself, but the synergistical mixture of a basic and this acidic protein is lethal. PLA2 catalyzes the calcium-dependent hydrolysis of the 2-acyl groups in 3-sn-phosphoglycerides. This chain is Acidic phospholipase A2 VP8, found in Daboia palaestinae (Palestine viper).